The following is a 268-amino-acid chain: Cytochrome b-c1 complex subunit Rieske-5, mitochondrial (268 aa).

The transit peptide at 1 to 56 directs the protein to the mitochondrion; that stretch reads MLRIAGRKLSSSAAARSSSAFFTRNPFTFTDDSSSPTRSPSPTSLASQFLDQFRGF. The Mitochondrial matrix segment spans residues 57–105; sequence SSNSVSPAHQTGLVSDLPATVAAIKNPSSKIVYDDSNHERYPPGDPSKR. The chain crosses the membrane as a helical span at residues 106–128; it reads AFAYFVLTGGRFVYASLVRLLIL. At 129 to 268 the chain is on the mitochondrial intermembrane side; that stretch reads KFVLSMSASK…FMEENKLLIG (140 aa). The Rieske domain occupies 178 to 266; that stretch reads INLANSVDLG…YSFMEENKLL (89 aa). The [2Fe-2S] cluster site is built by C211, H213, C230, and H233. C216 and C232 form a disulfide bridge.

It belongs to the Rieske iron-sulfur protein family. In terms of assembly, component of the ubiquinol-cytochrome c oxidoreductase (cytochrome b-c1 complex, complex III, CIII), a multisubunit enzyme composed of 3 respiratory subunits cytochrome b, cytochrome c1 and Rieske protein, 2 core protein subunits, and several low-molecular weight protein subunits. The complex exists as an obligatory dimer and forms supercomplexes (SCs) in the inner mitochondrial membrane with cytochrome c oxidase (complex IV, CIV). [2Fe-2S] cluster is required as a cofactor. High levels are seen in the flowers while a low level expression is seen in the roots, leaves and stems.

It is found in the mitochondrion inner membrane. The catalysed reaction is a quinol + 2 Fe(III)-[cytochrome c](out) = a quinone + 2 Fe(II)-[cytochrome c](out) + 2 H(+)(out). Its function is as follows. Component of the ubiquinol-cytochrome c oxidoreductase, a multisubunit transmembrane complex that is part of the mitochondrial electron transport chain which drives oxidative phosphorylation. The respiratory chain contains 3 multisubunit complexes succinate dehydrogenase (complex II, CII), ubiquinol-cytochrome c oxidoreductase (cytochrome b-c1 complex, complex III, CIII) and cytochrome c oxidase (complex IV, CIV), that cooperate to transfer electrons derived from NADH and succinate to molecular oxygen, creating an electrochemical gradient over the inner membrane that drives transmembrane transport and the ATP synthase. The cytochrome b-c1 complex catalyzes electron transfer from ubiquinol to cytochrome c, linking this redox reaction to translocation of protons across the mitochondrial inner membrane, with protons being carried across the membrane as hydrogens on the quinol. In the process called Q cycle, 2 protons are consumed from the matrix, 4 protons are released into the intermembrane space and 2 electrons are passed to cytochrome c. The Rieske protein is a catalytic core subunit containing a [2Fe-2S] iron-sulfur cluster. It cycles between 2 conformational states during catalysis to transfer electrons from the quinol bound in the Q(0) site in cytochrome b to cytochrome c1. This Nicotiana tabacum (Common tobacco) protein is Cytochrome b-c1 complex subunit Rieske-5, mitochondrial.